The following is a 426-amino-acid chain: 3-phosphoshikimate 1-carboxyvinyltransferase (426 aa).

3-phosphoshikimate contacts are provided by K22, S23, and R27. K22 contributes to the phosphoenolpyruvate binding site. Residues G96 and R124 each contribute to the phosphoenolpyruvate site. 3-phosphoshikimate is bound by residues S170, S171, Q172, S198, D314, N337, and K341. Phosphoenolpyruvate is bound at residue Q172. The active-site Proton acceptor is the D314. Residues R345, R387, and K412 each coordinate phosphoenolpyruvate.

This sequence belongs to the EPSP synthase family. In terms of assembly, monomer.

It is found in the cytoplasm. The catalysed reaction is 3-phosphoshikimate + phosphoenolpyruvate = 5-O-(1-carboxyvinyl)-3-phosphoshikimate + phosphate. It functions in the pathway metabolic intermediate biosynthesis; chorismate biosynthesis; chorismate from D-erythrose 4-phosphate and phosphoenolpyruvate: step 6/7. Functionally, catalyzes the transfer of the enolpyruvyl moiety of phosphoenolpyruvate (PEP) to the 5-hydroxyl of shikimate-3-phosphate (S3P) to produce enolpyruvyl shikimate-3-phosphate and inorganic phosphate. This is 3-phosphoshikimate 1-carboxyvinyltransferase from Shewanella woodyi (strain ATCC 51908 / MS32).